A 622-amino-acid chain; its full sequence is Matrilin-4 (622 aa).

The first 18 residues, 1-18, serve as a signal peptide directing secretion; it reads MRGLLCWPVLLLLLQPWE. In terms of domain architecture, VWFA 1 spans 34–213; that stretch reads DLVFVIDSSR…EFGLQFQSRL (180 aa). An N-linked (GlcNAc...) asparagine glycan is attached at Asn-69. An EGF-like 1; incomplete domain is found at 215–255; sequence GKDQCAEGGHGCQHQCVNAWAMFHCTCNPGYKLAADNKSCL. 12 disulfide bridges follow: Cys-219–Cys-230, Cys-226–Cys-239, Cys-241–Cys-254, Cys-260–Cys-271, Cys-267–Cys-280, Cys-282–Cys-295, Cys-301–Cys-312, Cys-308–Cys-321, Cys-323–Cys-336, Cys-342–Cys-353, Cys-349–Cys-362, and Cys-364–Cys-377. N-linked (GlcNAc...) asparagine glycosylation occurs at Asn-251. EGF-like domains follow at residues 256–292, 297–337, and 342–377; these read AIDLCAEGTHGCEHHCVNSPGSYFCHCQVGFVLQQDQ, AIDY…RSCQ, and CNGVDHGCEFQCVSEGLSYRCLCPEGRQLQADGKSC. The N-linked (GlcNAc...) asparagine glycan is linked to Asn-305. Positions 386-561 constitute a VWFA 2 domain; the sequence is DLVLLVDGSK…GTMTHLLENL (176 aa). Residues 591–622 are a coiled coil; sequence GRTLGALESLTLNLAQLTARLEDLENQLANQK.

Interacts with COMP. As to expression, embryonic kidney, lung and placenta.

The protein localises to the secreted. In terms of biological role, major component of the extracellular matrix of cartilage. The protein is Matrilin-4 (MATN4) of Homo sapiens (Human).